The chain runs to 265 residues: uncharacterized protein (265 aa).

A signal peptide spans 1–22 (MGYFKRVLLYIIVMVLSVFIIG). The N-palmitoyl cysteine moiety is linked to residue cysteine 23. A lipid anchor (S-diacylglycerol cysteine) is attached at cysteine 23.

This sequence belongs to the staphylococcal tandem lipoprotein family.

The protein localises to the cell membrane. This is an uncharacterized protein from Staphylococcus aureus (strain MSSA476).